The primary structure comprises 286 residues: Release factor glutamine methyltransferase (286 aa).

Residues 122–126 (GTGTG), Asp145, Trp173, and Asn188 contribute to the S-adenosyl-L-methionine site. 188-191 (NPPY) lines the substrate pocket.

It belongs to the protein N5-glutamine methyltransferase family. PrmC subfamily.

The catalysed reaction is L-glutaminyl-[peptide chain release factor] + S-adenosyl-L-methionine = N(5)-methyl-L-glutaminyl-[peptide chain release factor] + S-adenosyl-L-homocysteine + H(+). In terms of biological role, methylates the class 1 translation termination release factors RF1/PrfA and RF2/PrfB on the glutamine residue of the universally conserved GGQ motif. The polypeptide is Release factor glutamine methyltransferase (Shewanella oneidensis (strain ATCC 700550 / JCM 31522 / CIP 106686 / LMG 19005 / NCIMB 14063 / MR-1)).